The sequence spans 1048 residues: Ceruloplasmin (1048 aa).

Residues 1–19 (MKIFLLCIFLILCGTSVWA) form the signal peptide. Plastocyanin-like domains are found at residues 20–200 (KDKH…LIHC), 209–357 (KEKN…VQDC), and 370–554 (NVRH…MKIC). 3 residues coordinate Na(+): tyrosine 55, glycine 64, and tyrosine 67. The Cu(2+) site is built by histidine 120 and histidine 122. Histidine 120 is a binding site for O2. Lysine 128 is a binding site for Ca(2+). An N-linked (GlcNAc...) asparagine glycan is attached at asparagine 138. The Ca(2+) site is built by glutamine 143, aspartate 146, and aspartate 147. A disulfide bridge links cysteine 174 with cysteine 200. Positions 180 and 182 each coordinate Cu(2+). Histidine 180 provides a ligand contact to O2. Asparagine 227 carries N-linked (GlcNAc...) asparagine glycosylation. Serine 256 is a Na(+) binding site. Cysteine 276 and cysteine 357 are joined by a disulfide. Positions 295, 338, and 343 each coordinate Cu(2+). Positions 408, 417, and 420 each coordinate Na(+). A disulfide bridge connects residues cysteine 530 and cysteine 554. 2 N-linked (GlcNAc...) asparagine glycosylation sites follow: asparagine 556 and asparagine 582. The Plastocyanin-like 4 domain maps to 564–712 (RLKNVDKEFY…MKQKYTVSQC (149 aa)). A Na(+)-binding site is contributed by serine 611. Cysteine 631 and cysteine 712 form a disulfide bridge. Cu(2+)-binding residues include histidine 650, cysteine 693, histidine 698, and methionine 703. The active-site Nucleophile; for glutathione peroxidase activity is cysteine 693. A Phosphoserine modification is found at serine 716. 2 consecutive Plastocyanin-like domains span residues 724–894 (GERT…LIVC) and 902–1044 (SNPI…PNEE). Asparagine 756 carries an N-linked (GlcNAc...) asparagine glycan. Na(+) is bound by residues phenylalanine 761, glycine 770, and tyrosine 773. Cysteine 868 and cysteine 894 are disulfide-bonded. N-linked (GlcNAc...) asparagine glycosylation is present at asparagine 920. A Na(+)-binding site is contributed by serine 949. Cu(2+) contacts are provided by histidine 977, histidine 980, histidine 982, histidine 1022, cysteine 1023, histidine 1024, histidine 1028, and methionine 1033. Residues histidine 980 and histidine 982 each coordinate O2. Position 1024 (histidine 1024) interacts with O2.

It belongs to the multicopper oxidase family. Found in a complex with MPO and LTF; interacts directly with MPO and LTF, which allows Fe(3+) incorporation into LTF, activation of CP ferroxidase activity and protection of CP antioxidant properties by MPO. The cofactor is Cu(2+). In terms of tissue distribution, expressed by the liver and secreted in plasma. Also expressed in the hypothalamus, spleen and uterus. No expression in the cortex, heart, intestine or kidney.

The protein resides in the secreted. The catalysed reaction is 4 Fe(2+) + O2 + 4 H(+) = 4 Fe(3+) + 2 H2O. The enzyme catalyses 4 Cu(+) + O2 + 4 H(+) = 4 Cu(2+) + 2 H2O. It catalyses the reaction a hydroperoxide + 2 glutathione = an alcohol + glutathione disulfide + H2O. It carries out the reaction 4 nitric oxide + O2 + 2 H2O = 4 nitrite + 4 H(+). The catalysed reaction is 2 glutathione + H2O2 = glutathione disulfide + 2 H2O. Its function is as follows. Multifunctional blue, copper-binding (6-7 atoms per molecule) glycoprotein. It has ferroxidase activity oxidizing Fe(2+) to Fe(3+) without releasing radical oxygen species. It is involved in iron transport across the cell membrane. Copper ions provide a large number of enzymatic activites. Oxidizes highly toxic ferrous ions to the ferric state for further incorporation onto apo-transferrins, catalyzes Cu(+) oxidation and promotes the oxidation of biogenic amines such as norepinephrin and serotonin. Provides Cu(2+) ions for the ascorbate-mediated deaminase degradation of the heparan sulfate chains of GPC1. Has glutathione peroxidase-like activity, can remove both hydrogen peroxide and lipid hydroperoxide in the presence of thiols. Also shows NO-oxidase and NO2 synthase activities that determine endocrine NO homeostasis. This is Ceruloplasmin (CP) from Ovis aries (Sheep).